The chain runs to 1978 residues: MSTEDEKLLKEAKKLPWEDRLGHKNWKVRNEANVDLASVFDSITDPKDPRLRDFGHLFRKTVADSNAPVQEKALDALIAFLRAADSDAGRYAKEVCDAIALKCLTGRKNTVDKAQAAFLLWVELEAVDVFLDTMEKAIKNKVAKAVVPAVDVMFQALSEFGSKVIPPKRILKMLPELFDHQDQNVRASAKGVTLELCRWIGKDPVKSILFEKMRDTMKKELEAELANVTAGAKPTRKIRSEQDKEPEAEASSDVVGDGPSEEAVADAPQEIDEYDLMDPVDILTPLEKSGFWDGVKATKWSERKEAVAELTKLASTKKIAPGDFSEICRTLKKLITDVNLAVAVEAIQAIGNLACGLRTHFSASSRFMLPVLLEKLKEKKQSVTDPLTQTLQTMYKAGCLNLVDVIEDVKTAVKNKVPLVRSSTLTWLTFCLETSNKALILKAHKEYVPLCMECLNDGTPDVRDAAFSALAAIAKSVGMRPLERSLEKLDDVRKKKLSEMIAGSGGGDQAGTSSVTVQSSVGSTATGNSDASFVRKSAASMLSGKRPAPSAQASKKVGTGKPGGGKKDGSVRNEGSKSVEPPEDVEPAEMGLEEIENRLGSLVKPETVSQLKSSVWKERLEATLALKEEIEGLQELDKSVEILVRLLCAVPGWNEKNVQVQQQVIEIITYISSTAAKFPKKCVVLCITGTSERVADIKTRASAMKCLTAFCEAVGPGFVFERLFKIMKEHKNPKVLSEGLLWMVSAVDDFGVSLLKLKDLIDFCKDVGLQSSTAATRNATIKLLGALHKFVGPDIKGFLNDVKPALLSALDTEYEKNPFEGTAAPKRVVKTSVSTSTSSGGLDSLPREDISTKITPNLLKGFESPDWKMRLESIEAVNKILEEANKRIQPTGTGELFGGLRGRLLDSNKNLVMQTLTTIGGVAAAMGPAVEKASKGILSDVLKCLGDNKKHMRECTLAALDLWLGAVHLDKMIPYIIIALTDGKMGAEGRKDLFDWLTKQLTGLSDFVDAIHLLKPASTAMTDKSADVRKAAEGCISEILRVSGQEMIEKNLKDIQGPALALVLEKVRPGFVQEPFESSKAMAGPVSKGVTKISKSTSNGTLKQGNRSRAVPTKGSSQITSVHDIAIQSQALLNTKDSNKEDRERVVVRRIKFEELRPEQIQDLENDMMKFFREDLQKRLLSPDFKKQVDGLEILQKALPSVSKEIIEVLDVLLRWFVLQFCKSNTTCLLKVLEFLPELFNTLRDEEYCMTEAEAAIFLPCLAEKLGHNIEKVREKMRELMKQIIQAYSVGKTYPYILEGLRSKNNRTRIECTDLIGYLLETCGTEIGGLLKYLNIVASLTAERDGELRKAALNTMATGYQILGADIWKYVGKLTDAQKSMIDDRFKWKAKDMEKRREGKPGEARAALRRSVRDSGPEVAEQSGDISQTVPGPLFPRQSYGISEQMLERTPVPRTIAGVNGPTDWNEALDIIMFGSPEQSVEGMKVVCHELAQASNDPEESAIDELVKDADGLVSCLANKVAKTFDVSLMGASSRSCKYVLNTLMQTFQNKKLAHAVKEGTLESLITELLLWLLDERVPRMEDGSQLLKALNVLMLKILDNADRTSSFVVLISLLRPLDPSRWPSPATAEVYAVRNQKFSDLVVKCLIKLTKLLQSTIYEVDLDRLLQSIHVYLQDLGMEEIRRRAGADDKPLRMVKTVLHELVKLRGAAIKGHLSLVPIDMRPQPIILAYIDLNLETLAAARMLTATGPVGQTHWTDSTANNPSPPANSADVQLKQELGAIFKKIGDKQTSTIGLYDLYHITKSYPKVDIFSQLQNASEAFRTYIRDGLAQVEKNAAAGRTPSSLPLSTPPPSSLALPSPDIPSLSSLDVKPLMNPRSDLYTDDIRASNMNPGVMTGTLDAIRERMKNMQLASSEPVSKPLMPTNDNLSMNQQSVPPSQMGQETVHTHPVVLPMDEKALSGLQARMERLKGGSLEHM.

HEAT repeat units follow at residues 48–86 and 165–202; these read DPRL…AADS and IPPK…WIGK. The segment at 230 to 264 is disordered; it reads AGAKPTRKIRSEQDKEPEAEASSDVVGDGPSEEAV. A compositionally biased stretch (basic and acidic residues) spans 238–247; that stretch reads IRSEQDKEPE. 3 HEAT repeats span residues 322–359, 363–400, and 442–479; these read GDFS…GLRT, ASSR…AGCL, and KAHK…SVGM. The disordered stretch occupies residues 501–587; that stretch reads IAGSGGGDQA…SVEPPEDVEP (87 aa). The segment covering 510–527 has biased composition (low complexity); it reads AGTSSVTVQSSVGSTATG. Basic and acidic residues predominate over residues 565 to 577; it reads GKKDGSVRNEGSK. HEAT repeat units lie at residues 849–886, 890–928, 932–969, and 1008–1045; these read DIST…EANK, PTGT…AMGP, KASK…AVHL, and VDAI…VSGQ. The disordered stretch occupies residues 1087–1115; it reads SKGVTKISKSTSNGTLKQGNRSRAVPTKG. Residues 1093 to 1107 show a composition bias toward polar residues; sequence ISKSTSNGTLKQGNR. HEAT repeat units follow at residues 1230-1253, 1254-1286, 1287-1325, and 1328-1365; these read LKVL…MTEA, EAAI…QIIQ, AYSV…TCGT, and GGLL…ILGA. Over residues 1393 to 1403 the composition is skewed to basic and acidic residues; that stretch reads MEKRREGKPGE. A disordered region spans residues 1393–1431; the sequence is MEKRREGKPGEARAALRRSVRDSGPEVAEQSGDISQTVP. One copy of the HEAT 14 repeat lies at 1535–1575; the sequence is RSCKYVLNTLMQTFQNKKLAHAVKEGTLESLITELLLWLLD. The segment at 1837–1862 is disordered; it reads AAAGRTPSSLPLSTPPPSSLALPSPD.

This sequence belongs to the TOG/XMAP215 family. In terms of tissue distribution, expressed in roots, cotyledons, rosette leaves, stems, open flowers and green siliques.

The protein resides in the cytoplasm. It localises to the cytoskeleton. It is found in the phragmoplast. The protein localises to the spindle. In terms of biological role, microtubule-binding protein that is essential for cortical microtubules organization and function. Essential for maintaining the interphase cortical array and for correct morphogenesis. Promotes rapid growth and shrinkage of microtubules and suppresses the pausing of interphase microtubules. Regulates the structure and function of microtubule arrays during mitosis and cytokinesis. Probably not required for cellulose microfibrils alignment in roots. This Arabidopsis thaliana (Mouse-ear cress) protein is Protein MOR1 (MOR1).